Here is a 378-residue protein sequence, read N- to C-terminus: Chaperone protein DnaJ (378 aa).

A J domain is found at 5 to 69 (EYYDRLGVSK…QKRAAYDQYG (65 aa)). Residues 134–216 (GVEKEVSYNR…CHGTGHEKQA (83 aa)) form a CR-type zinc finger. Zn(2+)-binding residues include C147, C150, C164, C167, C190, C193, C204, and C207. 4 CXXCXGXG motif repeats span residues 147–154 (CGTCLGSG), 164–171 (CRKCHGSG), 190–197 (CDICHGSG), and 204–211 (CQTCHGTG).

This sequence belongs to the DnaJ family. In terms of assembly, homodimer. It depends on Zn(2+) as a cofactor.

Its subcellular location is the cytoplasm. Its function is as follows. Participates actively in the response to hyperosmotic and heat shock by preventing the aggregation of stress-denatured proteins and by disaggregating proteins, also in an autonomous, DnaK-independent fashion. Unfolded proteins bind initially to DnaJ; upon interaction with the DnaJ-bound protein, DnaK hydrolyzes its bound ATP, resulting in the formation of a stable complex. GrpE releases ADP from DnaK; ATP binding to DnaK triggers the release of the substrate protein, thus completing the reaction cycle. Several rounds of ATP-dependent interactions between DnaJ, DnaK and GrpE are required for fully efficient folding. Also involved, together with DnaK and GrpE, in the DNA replication of plasmids through activation of initiation proteins. In Streptococcus pyogenes serotype M1, this protein is Chaperone protein DnaJ.